The following is a 274-amino-acid chain: Large ribosomal subunit protein uL2 (274 aa).

Residues 223-256 form a disordered region; the sequence is VAMNPVDHPHGGGEGRTSGGRHPVTPWGIPTKGY.

It belongs to the universal ribosomal protein uL2 family. As to quaternary structure, part of the 50S ribosomal subunit. Forms a bridge to the 30S subunit in the 70S ribosome.

One of the primary rRNA binding proteins. Required for association of the 30S and 50S subunits to form the 70S ribosome, for tRNA binding and peptide bond formation. It has been suggested to have peptidyltransferase activity; this is somewhat controversial. Makes several contacts with the 16S rRNA in the 70S ribosome. The protein is Large ribosomal subunit protein uL2 of Trichlorobacter lovleyi (strain ATCC BAA-1151 / DSM 17278 / SZ) (Geobacter lovleyi).